We begin with the raw amino-acid sequence, 277 residues long: Carbonyl reductase [NADPH] 1 (277 aa).

Residue Ser2 is modified to N-acetylserine. Phosphoserine is present on residues Ser2 and Ser30. Residues 10 to 34 (VTGG…GDVV), 63 to 64 (DI), and Asn90 contribute to the NADP(+) site. Glutathione contacts are provided by residues 95 to 97 (FKV) and Gln106. Ser140 is a substrate binding site. 193–194 (AY) is a glutathione binding site. Tyr194 (proton acceptor) is an active-site residue. NADP(+) contacts are provided by residues 194-198 (YGVTK) and 231-233 (VRT). Residue Lys239 is modified to N6-1-carboxyethyl lysine.

The protein belongs to the short-chain dehydrogenases/reductases (SDR) family. As to quaternary structure, monomer.

The protein localises to the cytoplasm. The enzyme catalyses a secondary alcohol + NADP(+) = a ketone + NADPH + H(+). It catalyses the reaction prostaglandin F2alpha + NADP(+) = prostaglandin E2 + NADPH + H(+). The catalysed reaction is prostaglandin E1 + NADP(+) = 15-oxoprostaglandin E1 + NADPH + H(+). It carries out the reaction menadione + NADPH + H(+) = menadiol + NADP(+). The enzyme catalyses prostaglandin D2 + NADP(+) = 15-oxoprostaglandin D2 + NADPH + H(+). It catalyses the reaction prostaglandin E2 + NADP(+) = 15-oxoprostaglandin E2 + NADPH + H(+). The catalysed reaction is prostaglandin F2alpha + NADP(+) = 15-oxoprostaglandin F2alpha + NADPH + H(+). It carries out the reaction daunorubicin + NADPH + H(+) = 13-dihydrodaunorubicin + NADP(+). The enzyme catalyses S-nitrosoglutathione + NADPH + H(+) = S-(hydroxysulfenamide)glutathione + NADP(+). It catalyses the reaction a primary alcohol + NADP(+) = an aldehyde + NADPH + H(+). The catalysed reaction is cortisol + NADPH + H(+) = 20beta-dihydrocortisol + NADP(+). It carries out the reaction corticosterone + NADPH + H(+) = 20beta-dihydrocorticosterone + NADP(+). Functionally, NADPH-dependent reductase with broad substrate specificity. Catalyzes the reduction of a wide variety of carbonyl compounds including quinones, prostaglandins, menadione, plus various xenobiotics. Catalyzes the reduction of the antitumor anthracyclines doxorubicin and daunorubicin to the cardiotoxic compounds doxorubicinol and daunorubicinol. Can convert prostaglandin E to prostaglandin F2-alpha. Can bind glutathione, which explains its higher affinity for glutathione-conjugated substrates. Catalyzes the reduction of S-nitrosoglutathione. In addition, participates in the glucocorticoid metabolism by catalyzing the NADPH-dependent cortisol/corticosterone into 20beta-dihydrocortisol (20b-DHF) or 20beta-corticosterone (20b-DHB), which are weak agonists of NR3C1 and NR3C2 in adipose tissue. The polypeptide is Carbonyl reductase [NADPH] 1 (Pongo abelii (Sumatran orangutan)).